A 109-amino-acid polypeptide reads, in one-letter code: SRA stem-loop-interacting RNA-binding protein, mitochondrial (109 aa).

A Phosphoserine modification is found at Ser15. The 85-residue stretch at 19–103 (PVAFVRRIPW…RRPKLPQTSD (85 aa)) folds into the RRM domain. Thr101 carries the post-translational modification Phosphothreonine. The residue at position 102 (Ser102) is a Phosphoserine.

It localises to the mitochondrion. The protein localises to the nucleus. In terms of biological role, RNA-binding protein that acts as a nuclear receptor corepressor. Probably acts by binding the SRA RNA, and repressing the SRA-mediated nuclear receptor coactivation. Binds the STR7 loop of SRA RNA. Also able to repress glucocorticoid (GR), androgen (AR), thyroid (TR) and VDR-mediated transactivation. The sequence is that of SRA stem-loop-interacting RNA-binding protein, mitochondrial (SLIRP) from Pongo abelii (Sumatran orangutan).